We begin with the raw amino-acid sequence, 4427 residues long: Dynein axonemal heavy chain 2 (4427 aa).

The disordered stretch occupies residues 1-73 (MSSKAEKKQR…AQSEESVEPE (73 aa)). A stem region spans residues 1 to 1764 (MSSKAEKKQR…VIRQTNTQFQ (1764 aa)). A compositionally biased stretch (polar residues) spans 14–23 (RGSSQASWSG). Residues 50–59 (LPKEEPEPRL) show a composition bias toward basic and acidic residues. Residues 1404 to 1439 (EDNQVALSTMKASRFVKAFEKDVDHWERCLSLILEV) form a TPR 1 repeat. AAA regions lie at residues 1765 to 1986 (YNYE…LLRY), 2046 to 2273 (ETVE…DNCK), 2378 to 2625 (RYPP…VFQG), and 2722 to 2974 (EYNL…LRRH). ATP is bound by residues 1803 to 1810 (GPAGTGKT), 2084 to 2091 (GCTGSGKT), and 2416 to 2423 (GPVGTGKT). One copy of the TPR 2 repeat lies at 2721 to 2754 (NEYNLSPSVVPMQLVLFREAIEHITRIVRVIGQP). An ATP-binding site is contributed by 2762–2769 (GIGGSGRQ). The interval 2989-3272 (YKKLLGEKRQ…EELRKKSEEM (284 aa)) is stalk. The stretch at 3012 to 3049 (FKIDETREKVQVMSLELEDAKKKVAEFQKQCEEYLVII) forms a coiled coil. A TPR 3 repeat occupies 3072 to 3105 (VEEIKCQALADNAQKDLEEALPALEEAMRALESL). Coiled coils occupy residues 3216-3304 (KRIR…EEDL) and 3523-3567 (VRKE…GSLL). AAA regions lie at residues 3358-3588 (LCNP…EVTE) and 3804-4023 (VTSF…LLSL). TPR repeat units follow at residues 4072–4104 (STPF…LLPG) and 4105–4140 (MDPP…QPQI).

The protein belongs to the dynein heavy chain family. Part of the axonemal inner dynein arm complex that consists of at least two heavy chains and a number of intermediate and light chains. Interacts with DNAI4. In terms of tissue distribution, expressed primarily in trachea and testis, 2 tissues containing axonemal structures. Also expressed in lung. Expressed in spermatozoa (at protein level).

The protein localises to the cytoplasm. It is found in the cytoskeleton. The protein resides in the cilium axoneme. Its subcellular location is the flagellum axoneme. As part of the axonemal inner dynein arm complex plays a central role in ciliary beat. Expressed in sperm flagellum, it is required for sperm motility. Dyneins are microtubule-based molecular motors possessing ATPase activities that can convert the chemical energy of ATP into relative sliding between adjacent microtubule doublets to generate ciliary bending. The polypeptide is Dynein axonemal heavy chain 2 (Homo sapiens (Human)).